A 671-amino-acid chain; its full sequence is Sodium, potassium, lithium and rubidium/H(+) antiporter (671 aa).

11 helical membrane-spanning segments follow: residues 7 to 29 (VLVL…FIPV), 46 to 66 (GLHI…PLLF), 83 to 103 (PILL…GYTI), 110 to 130 (IPLP…VVAV), 156 to 176 (ASGL…AFSI), 182 to 202 (SFVL…FFII), 228 to 248 (FVIY…VVAG), 276 to 296 (IILF…IPDV), 315 to 335 (ILII…LFWA), 364 to 384 (GAVT…GSPF), and 389 to 409 (LIIF…SVLL).

This sequence belongs to the monovalent cation:proton antiporter 1 (CPA1) transporter (TC 2.A.36) family. Nhak (TC 2.A.36.3.2) subfamily.

It is found in the cell membrane. Transporter involved in the efflux of sodium, potassium, lithium and rubidium. The polypeptide is Sodium, potassium, lithium and rubidium/H(+) antiporter (nhaK) (Bacillus pumilus (strain SAFR-032)).